We begin with the raw amino-acid sequence, 254 residues long: MKLFVFFVAAVVLVAWPCHGAGYQRFPLRMKTGYGERSSEVKCASFRLAVEAHNIRAFKTIPEECVEPTKDYINGEQFRSDSKTVNQQAFFYASEREVHHNDIFIFGIDNTVLSNIPYYEKHGYGVEEFNETLYDEWVNKGDAPALPETLKNYNKLLSLGFKIVFLSGRYLDKMAVTEANLKKAGFHTWEQLILKDPHLITPNALSYKSAMRENLLRQGYRIVGIIGDQWSDLLGDHRGESRTFKLPNPMYYIE.

Positions 1–20 are cleaved as a signal peptide; the sequence is MKLFVFFVAAVVLVAWPCHG. The propeptide occupies 21–35; that stretch reads AGYQRFPLRMKTGYG. A glycan (N-linked (GlcNAc...) asparagine) is linked at asparagine 130.

The protein belongs to the APS1/VSP family. As to expression, accumulates in the stems of developing soybean seedlings.

Its function is as follows. May function as somatic storage protein during early seedling development. This is Stem 31 kDa glycoprotein (VSPB) from Glycine max (Soybean).